The chain runs to 40 residues: Muscarinic m1-toxin3 (40 aa).

Cys-3 and Cys-24 are oxidised to a cystine.

Belongs to the three-finger toxin family. Short-chain subfamily. Aminergic toxin sub-subfamily. Monomer. Post-translationally, contains 4 disulfide bonds. Expressed by the venom gland.

Its subcellular location is the secreted. In terms of biological role, binds irreversibly and specifically to M1 (CHRM1) muscarinic acetylcholine receptors, blocking further binding of antagonists and preventing the action of agonists. The protein is Muscarinic m1-toxin3 of Dendroaspis angusticeps (Eastern green mamba).